Reading from the N-terminus, the 301-residue chain is Protoheme IX farnesyltransferase (301 aa).

Transmembrane regions (helical) follow at residues 29–49 (VVAL…PGVV), 51–71 (IVPL…AAAF), 96–118 (VSIA…VLYV), 123–143 (LTAW…TAYL), 151–171 (IVVG…AVTG), 177–197 (ALLL…ALAI), 223–243 (CIFL…LVGM), 244–264 (CGPV…YKAW), and 281–301 (FSIY…YLWL).

The protein belongs to the UbiA prenyltransferase family. Protoheme IX farnesyltransferase subfamily.

The protein resides in the cell inner membrane. The catalysed reaction is heme b + (2E,6E)-farnesyl diphosphate + H2O = Fe(II)-heme o + diphosphate. It participates in porphyrin-containing compound metabolism; heme O biosynthesis; heme O from protoheme: step 1/1. Functionally, converts heme B (protoheme IX) to heme O by substitution of the vinyl group on carbon 2 of heme B porphyrin ring with a hydroxyethyl farnesyl side group. The protein is Protoheme IX farnesyltransferase of Shewanella halifaxensis (strain HAW-EB4).